The sequence spans 396 residues: MSIATTFGTANTSGTIKAMLLGCGELGKEVAIELQRYGIEVIGVDRYPNAPAMQIAHRFHVINMLDAKALKAVIELEKPDLVIPEIEAIATQTLVELEQQGLHVVPTANAAKLTMDREGIRRLAAETLAIPTSKYFFCDTLAEFEQAVTDIGIPCVVKPVMSSSGKGQSVIKSTQTIQQAWAYAQEGGRAGKGRVIVEAFIPFDYEITLLTISAVNGIHFCDPIGHRQEDGDYRESWQPQSMSAEVLHKAQAMSQRVVEALGGYGLFGVELFIRGDEVYFSEVSPRPHDTGLVTLISQDLSEFALHVRAILGLPISNIVQHGPSASAVILAEGTSTNIRYQGMAAALAPADTQLRLFGKPDIDGRRRLGVALARDNSVEQAVEKAKTVASHIKVLF.

N(1)-(5-phospho-beta-D-ribosyl)glycinamide-binding positions include 25–26 (EL) and E85. ATP-binding positions include R117, K158, 163 to 168 (SSGKGQ), 198 to 201 (EAFI), and E206. One can recognise an ATP-grasp domain in the interval 122–311 (RLAAETLAIP…EFALHVRAIL (190 aa)). E270 and E282 together coordinate Mg(2+). Residues D289, K359, and 366-367 (RR) contribute to the N(1)-(5-phospho-beta-D-ribosyl)glycinamide site.

The protein belongs to the PurK/PurT family. Homodimer.

The enzyme catalyses N(1)-(5-phospho-beta-D-ribosyl)glycinamide + formate + ATP = N(2)-formyl-N(1)-(5-phospho-beta-D-ribosyl)glycinamide + ADP + phosphate + H(+). It participates in purine metabolism; IMP biosynthesis via de novo pathway; N(2)-formyl-N(1)-(5-phospho-D-ribosyl)glycinamide from N(1)-(5-phospho-D-ribosyl)glycinamide (formate route): step 1/1. Involved in the de novo purine biosynthesis. Catalyzes the transfer of formate to 5-phospho-ribosyl-glycinamide (GAR), producing 5-phospho-ribosyl-N-formylglycinamide (FGAR). Formate is provided by PurU via hydrolysis of 10-formyl-tetrahydrofolate. This chain is Formate-dependent phosphoribosylglycinamide formyltransferase, found in Shewanella frigidimarina (strain NCIMB 400).